Here is a 235-residue protein sequence, read N- to C-terminus: Large ribosomal subunit protein uL1 (235 aa).

The protein belongs to the universal ribosomal protein uL1 family. In terms of assembly, part of the 50S ribosomal subunit.

In terms of biological role, binds directly to 23S rRNA. The L1 stalk is quite mobile in the ribosome, and is involved in E site tRNA release. Protein L1 is also a translational repressor protein, it controls the translation of the L11 operon by binding to its mRNA. The chain is Large ribosomal subunit protein uL1 from Fusobacterium nucleatum subsp. nucleatum (strain ATCC 25586 / DSM 15643 / BCRC 10681 / CIP 101130 / JCM 8532 / KCTC 2640 / LMG 13131 / VPI 4355).